A 314-amino-acid chain; its full sequence is Small ribosomal subunit biogenesis GTPase RsgA (314 aa).

One can recognise a CP-type G domain in the interval 78–238 (SEIFREKLIA…IIDSPGFQEF (161 aa)). GTP contacts are provided by residues 127–130 (NKID) and 180–188 (GQSGVGKST). The Zn(2+) site is built by cysteine 262, cysteine 267, histidine 269, and cysteine 275.

It belongs to the TRAFAC class YlqF/YawG GTPase family. RsgA subfamily. In terms of assembly, monomer. Associates with 30S ribosomal subunit, binds 16S rRNA. The cofactor is Zn(2+).

The protein localises to the cytoplasm. Its function is as follows. One of several proteins that assist in the late maturation steps of the functional core of the 30S ribosomal subunit. Helps release RbfA from mature subunits. May play a role in the assembly of ribosomal proteins into the subunit. Circularly permuted GTPase that catalyzes slow GTP hydrolysis, GTPase activity is stimulated by the 30S ribosomal subunit. In Nitrosomonas europaea (strain ATCC 19718 / CIP 103999 / KCTC 2705 / NBRC 14298), this protein is Small ribosomal subunit biogenesis GTPase RsgA.